Consider the following 133-residue polypeptide: UPF0344 protein SE_0666 (133 aa).

A run of 4 helical transmembrane segments spans residues 1–21, 42–62, 71–91, and 103–123; these read MLHVHILSWVLAIILFIATYL, LFMLLTLISGFWELIEEFMAA, MLLTLKMLCGLAVIAFMEISI, and FFWITIILIIITMAIGVILPW.

It belongs to the UPF0344 family.

The protein resides in the cell membrane. The chain is UPF0344 protein SE_0666 from Staphylococcus epidermidis (strain ATCC 12228 / FDA PCI 1200).